Reading from the N-terminus, the 100-residue chain is Insertion element IS600 uncharacterized 11 kDa protein (100 aa).

It belongs to the transposase 8 family.

This Shigella sonnei protein is Insertion element IS600 uncharacterized 11 kDa protein.